The following is a 148-amino-acid chain: Snaclec convulxin subunit beta (148 aa).

The first 23 residues, 1 to 23 (MGRFIFVSFGLLVVFLSLSGSEA), serve as a signal peptide directing secretion. Disulfide bonds link cysteine 27–cysteine 38, cysteine 55–cysteine 144, and cysteine 121–cysteine 136. Residues 34 to 148 (YDRYCYKVFK…TYSFVCKFEA (115 aa)) form the C-type lectin domain.

Belongs to the snaclec family. Tetramer of heterodimers of alpha and beta subunits (alphabeta)(4); disulfide-linked. As to expression, expressed by the venom gland.

The protein resides in the secreted. Its function is as follows. Snake venom lectin that activates platelets by binding to the platelet collagen receptor glycoprotein VI (GP6). The indirect activation of integrin alpha-IIb/beta-3 (ITGA2B/ITGB3) also induced by the toxin is upstream the cytoskeletal translocation of GPIb, FcRgamma (FCER1G) and 14-3-3zeta (YWHAZ). This Crotalus durissus terrificus (South American rattlesnake) protein is Snaclec convulxin subunit beta.